The primary structure comprises 436 residues: GTPase Der (436 aa).

EngA-type G domains follow at residues 4-167 and 176-351; these read PVVA…KNIP and VQFC…ENHS. GTP contacts are provided by residues 10–17, 57–61, 119–122, 182–189, 229–233, and 294–297; these read GRPNVGKS, DTGGI, NKVD, DTAGM, and NKWD. Positions 352–436 constitute a KH-like domain; that stretch reads MRVQTNILND…PIRIFARARK (85 aa).

This sequence belongs to the TRAFAC class TrmE-Era-EngA-EngB-Septin-like GTPase superfamily. EngA (Der) GTPase family. In terms of assembly, associates with the 50S ribosomal subunit.

GTPase that plays an essential role in the late steps of ribosome biogenesis. The sequence is that of GTPase Der from Bacillus licheniformis (strain ATCC 14580 / DSM 13 / JCM 2505 / CCUG 7422 / NBRC 12200 / NCIMB 9375 / NCTC 10341 / NRRL NRS-1264 / Gibson 46).